Consider the following 1290-residue polypeptide: DNA-directed RNA polymerase subunit beta' (1290 aa).

Residues C60, C62, C75, and C78 each contribute to the Zn(2+) site. Mg(2+) is bound by residues D535, D537, and D539. Zn(2+) is bound by residues C875, C953, C960, and C963.

The protein belongs to the RNA polymerase beta' chain family. As to quaternary structure, the RNAP catalytic core consists of 2 alpha, 1 beta, 1 beta' and 1 omega subunit. When a sigma factor is associated with the core the holoenzyme is formed, which can initiate transcription. Mg(2+) serves as cofactor. Requires Zn(2+) as cofactor.

It catalyses the reaction RNA(n) + a ribonucleoside 5'-triphosphate = RNA(n+1) + diphosphate. In terms of biological role, DNA-dependent RNA polymerase catalyzes the transcription of DNA into RNA using the four ribonucleoside triphosphates as substrates. This Nocardioides sp. (strain ATCC BAA-499 / JS614) protein is DNA-directed RNA polymerase subunit beta'.